A 435-amino-acid chain; its full sequence is Hyaluronidase-1 (435 aa).

An N-terminal signal peptide occupies residues 1–21 (MAAHLLPICALFLTLLDMAQG). 2 cysteine pairs are disulfide-bonded: Cys43–Cys333 and Cys207–Cys221. A glycan (N-linked (GlcNAc...) asparagine) is linked at Asn99. Catalysis depends on Glu131, which acts as the Proton donor. Residues Asn216 and Asn350 are each glycosylated (N-linked (GlcNAc...) asparagine). Residues 354–430 (GALLCSQALC…YPGWQAPWCE (77 aa)) enclose the EGF-like domain. 3 disulfides stabilise this stretch: Cys358-Cys369, Cys363-Cys418, and Cys420-Cys429.

This sequence belongs to the glycosyl hydrolase 56 family. As to expression, highly expressed in the liver, kidney and heart. Weakly expressed in lung, placenta and skeletal muscle. No expression detected in adult brain. Isoform 1 is expressed only in bladder and prostate cancer cells, G2/G3 bladder tumor tissues and lymph node specimens showing tumor invasive tumors cells. Isoform 3, isoform 4, isoform 5 and isoform 6 are expressed in normal bladder and bladder tumor tissues.

The protein localises to the secreted. The protein resides in the lysosome. It carries out the reaction Random hydrolysis of (1-&gt;4)-linkages between N-acetyl-beta-D-glucosamine and D-glucuronate residues in hyaluronate.. May have a role in promoting tumor progression. May block the TGFB1-enhanced cell growth. The polypeptide is Hyaluronidase-1 (HYAL1) (Homo sapiens (Human)).